The following is a 237-amino-acid chain: Survival of motor neuron-related-splicing factor 30 (237 aa).

The segment covering 52 to 69 has biased composition (polar residues); it reads SQPAEGTTSTKSSETVAP. Disordered stretches follow at residues 52-73 and 149-198; these read SQPA…SHSW and REYK…RSIF. The 61-residue stretch at 72–132 folds into the Tudor domain; that stretch reads SWRVGDHCMA…KKVEEGRIRD (61 aa). The short motif at 142-160 is the Nuclear localization signal element; sequence KELQAEQREYKKKKAQKKV. A compositionally biased stretch (basic residues) spans 151 to 161; that stretch reads YKKKKAQKKVQ. The segment covering 162 to 175 has biased composition (basic and acidic residues); that stretch reads RMKELEQEREDQKS. Over residues 176-185 the composition is skewed to polar residues; sequence KWQQFNNKAY.

Belongs to the SMN family. In terms of assembly, associates with spliceosomes.

Its subcellular location is the nucleus speckle. The protein localises to the nucleus. It is found in the cajal body. In terms of biological role, involved in spliceosome assembly. In Danio rerio (Zebrafish), this protein is Survival of motor neuron-related-splicing factor 30 (smndc1).